The primary structure comprises 199 residues: Riboflavin synthase (199 aa).

2 Lumazine-binding repeats span residues 1-95 (MFSG…IGGH) and 96-188 (FVSG…VDTI). Residues 4–6 (GII), 46–48 (CLT), 60–65 (DVTEET), 99–101 (GHV), Lys130, 139–141 (SLT), and 153–158 (SLIPET) contribute to the 2,4-dihydroxypteridine site.

Homotrimer.

It carries out the reaction 2 6,7-dimethyl-8-(1-D-ribityl)lumazine + H(+) = 5-amino-6-(D-ribitylamino)uracil + riboflavin. Its pathway is cofactor biosynthesis; riboflavin biosynthesis; riboflavin from 2-hydroxy-3-oxobutyl phosphate and 5-amino-6-(D-ribitylamino)uracil: step 2/2. In terms of biological role, catalyzes the dismutation of two molecules of 6,7-dimethyl-8-ribityllumazine, resulting in the formation of riboflavin and 5-amino-6-(D-ribitylamino)uracil. The chain is Riboflavin synthase (ribE) from Chlamydia trachomatis serovar D (strain ATCC VR-885 / DSM 19411 / UW-3/Cx).